Consider the following 307-residue polypeptide: Dihydroorotate dehydrogenase B (NAD(+)), catalytic subunit (307 aa).

FMN is bound by residues S22 and 46 to 47 (KT). Residues K46, 70–74 (NAVGL), and N128 contribute to the substrate site. Position 128 (N128) interacts with FMN. Catalysis depends on C131, which acts as the Nucleophile. 2 residues coordinate FMN: K166 and I192. Position 193–194 (193–194 (NT)) interacts with substrate. FMN is bound by residues G218, 244 to 245 (GG), and 266 to 267 (GT).

It belongs to the dihydroorotate dehydrogenase family. Type 1 subfamily. In terms of assembly, heterotetramer of 2 PyrK and 2 PyrD type B subunits. FMN serves as cofactor.

The protein localises to the cytoplasm. The catalysed reaction is (S)-dihydroorotate + NAD(+) = orotate + NADH + H(+). The protein operates within pyrimidine metabolism; UMP biosynthesis via de novo pathway; orotate from (S)-dihydroorotate (NAD(+) route): step 1/1. Its function is as follows. Catalyzes the conversion of dihydroorotate to orotate with NAD(+) as electron acceptor. The polypeptide is Dihydroorotate dehydrogenase B (NAD(+)), catalytic subunit (pyrD) (Desulforudis audaxviator (strain MP104C)).